The following is a 310-amino-acid chain: Small ribosomal subunit protein uS2 (310 aa).

The segment covering 249–272 (WERDLLEGEKAEKKDDAEAAEKPA) has biased composition (basic and acidic residues). The interval 249-310 (WERDLLEGEK…EAPAADAEQA (62 aa)) is disordered. A compositionally biased stretch (low complexity) spans 273–310 (EAPAAEAPAAEAAEAPAAEAAPAEEPAAEAPAADAEQA).

The protein belongs to the universal ribosomal protein uS2 family.

This Streptomyces coelicolor (strain ATCC BAA-471 / A3(2) / M145) protein is Small ribosomal subunit protein uS2 (rpsB).